Reading from the N-terminus, the 455-residue chain is Deoxyribodipyrimidine photo-lyase (455 aa).

The Photolyase/cryptochrome alpha/beta domain occupies 2–131; sequence SVAVVLFTSD…ELHVHDAVVT (130 aa). FAD contacts are provided by residues Tyr219 and 231–235; that span reads TSRLS. Interaction with DNA regions lie at residues 266–273 and 330–331; these read QLAWRDFH and NR. Residue 361–363 participates in FAD binding; the sequence is DGD. DNA is bound at residue Gln392.

It belongs to the DNA photolyase class-1 family. As to quaternary structure, monomer. It depends on FAD as a cofactor. Coenzyme F420-(gamma-Glu)n serves as cofactor.

The catalysed reaction is cyclobutadipyrimidine (in DNA) = 2 pyrimidine residues (in DNA).. Functionally, involved in repair of UV radiation-induced DNA damage. Catalyzes the light-dependent monomerization (300-600 nm) of cyclobutyl pyrimidine dimers (in cis-syn configuration), which are formed between adjacent bases on the same DNA strand upon exposure to ultraviolet radiation. The sequence is that of Deoxyribodipyrimidine photo-lyase (phr) from Streptomyces griseus.